A 358-amino-acid polypeptide reads, in one-letter code: MNIRYLARNNILTLKPYQSARKCTHSGNIWLNANEFPIAPDYQFRYKKIHRYPTCQPQEVINNYAYYAGVRSDQILVSRGADESIELLMKVFCNPGKDVIIFCPPTYGMYKTTAEILGINYRIIPKKENWQLDLASIKSQLNNVKLIYICNPNNPTGNIIHLNSLKKLLKIIQNRALLVTDEAYIDFCPDASLVRWLPMYPHLVILRTLSKAFALAGLRCGFTLANPEIIKLLEKVIAPYPLSTPVIDIAEQALTPISIQYTQNRIATVNTNRNILITGLKKCSCVQQVFNSHANYVLVKFNPKYQVFKTLLHQGIVLRDQSNQPGLVNCLRITVGTYNECKHVVSVLKKLHVASLSI.

Lys-211 is modified (N6-(pyridoxal phosphate)lysine).

It belongs to the class-II pyridoxal-phosphate-dependent aminotransferase family. Histidinol-phosphate aminotransferase subfamily. As to quaternary structure, homodimer. Requires pyridoxal 5'-phosphate as cofactor.

It carries out the reaction L-histidinol phosphate + 2-oxoglutarate = 3-(imidazol-4-yl)-2-oxopropyl phosphate + L-glutamate. It participates in amino-acid biosynthesis; L-histidine biosynthesis; L-histidine from 5-phospho-alpha-D-ribose 1-diphosphate: step 7/9. This chain is Histidinol-phosphate aminotransferase, found in Blochmanniella pennsylvanica (strain BPEN).